Consider the following 122-residue polypeptide: Urease subunit beta (122 aa).

It belongs to the urease beta subunit family. In terms of assembly, heterotrimer of UreA (gamma), UreB (beta) and UreC (alpha) subunits. Three heterotrimers associate to form the active enzyme.

The protein resides in the cytoplasm. The enzyme catalyses urea + 2 H2O + H(+) = hydrogencarbonate + 2 NH4(+). Its pathway is nitrogen metabolism; urea degradation; CO(2) and NH(3) from urea (urease route): step 1/1. This chain is Urease subunit beta, found in Lysinibacillus sphaericus (strain C3-41).